Reading from the N-terminus, the 339-residue chain is Ketol-acid reductoisomerase (NADP(+)) (339 aa).

Residues 1–182 (MRVYYDRDAD…GGGRSGIIET (182 aa)) form the KARI N-terminal Rossmann domain. NADP(+) contacts are provided by residues 24-27 (YGSQ), K48, S51, T53, and 83-86 (DELQ). Residue H108 is part of the active site. NADP(+) is bound at residue G134. A KARI C-terminal knotted domain is found at 183 to 328 (NFKEECETDL…AKLRGMMPWI (146 aa)). D191, E195, E227, and E231 together coordinate Mg(2+). S252 lines the substrate pocket.

It belongs to the ketol-acid reductoisomerase family. It depends on Mg(2+) as a cofactor.

It catalyses the reaction (2R)-2,3-dihydroxy-3-methylbutanoate + NADP(+) = (2S)-2-acetolactate + NADPH + H(+). The enzyme catalyses (2R,3R)-2,3-dihydroxy-3-methylpentanoate + NADP(+) = (S)-2-ethyl-2-hydroxy-3-oxobutanoate + NADPH + H(+). It participates in amino-acid biosynthesis; L-isoleucine biosynthesis; L-isoleucine from 2-oxobutanoate: step 2/4. The protein operates within amino-acid biosynthesis; L-valine biosynthesis; L-valine from pyruvate: step 2/4. Its function is as follows. Involved in the biosynthesis of branched-chain amino acids (BCAA). Catalyzes an alkyl-migration followed by a ketol-acid reduction of (S)-2-acetolactate (S2AL) to yield (R)-2,3-dihydroxy-isovalerate. In the isomerase reaction, S2AL is rearranged via a Mg-dependent methyl migration to produce 3-hydroxy-3-methyl-2-ketobutyrate (HMKB). In the reductase reaction, this 2-ketoacid undergoes a metal-dependent reduction by NADPH to yield (R)-2,3-dihydroxy-isovalerate. The sequence is that of Ketol-acid reductoisomerase (NADP(+)) from Sinorhizobium medicae (strain WSM419) (Ensifer medicae).